The sequence spans 418 residues: Putative ion-transport protein YfeO (418 aa).

12 helical membrane-spanning segments follow: residues 10–30 (LLLSLPAVAIGIASSLILIVV), 54–74 (DSPLWIIGVLTLTGIAVGLVI), 99–119 (ALPGLIVALILGLAGGVSLGP), 120–140 (EHPIMTVNIALAVAIGARLLP), 149–169 (ILASAGTIGALFGTPVAAALI), 186–206 (LFAPLMAAAAGALTTGLFFHP), 223–243 (ILSGAIVAAIAIAAGMVAVWC), 258–278 (VLVLGIGGFILGILGVIGGPV), 300–320 (DYFLLAVIKLAALVVAAASGF), 322–342 (GGRIFPAVFVGVALGLMLHEH), 343–363 (VPAVPAAITVSCAILGIVLVV), and 371–391 (LFMAAVVVPNTTLLPLLCIVM).

Belongs to the chloride channel (TC 2.A.49) family.

The protein resides in the cell membrane. The chain is Putative ion-transport protein YfeO from Escherichia coli O9:H4 (strain HS).